Here is a 411-residue protein sequence, read N- to C-terminus: Translation initiation factor 2 subunit gamma (411 aa).

In terms of domain architecture, tr-type G spans 9-203; it reads QAEVNIGMVG…AIEDFIPTPK (195 aa). Residues 18-25 form a G1 region; it reads GHVDHGKT. Positions 21, 25, 46, and 48 each coordinate Mg(2+). A GTP-binding site is contributed by 21 to 26; that stretch reads DHGKTT. Positions 46 to 50 are G2; it reads GITIK. The Zn(2+) site is built by Cys-61, Cys-64, Cys-73, and Cys-76. The segment at 90-93 is G3; sequence DAPG. GTP-binding positions include 146 to 149 and 181 to 183; these read NKIE and SAL. A G4 region spans residues 146–149; the sequence is NKIE. Residues 181–183 are G5; that stretch reads SAL.

Belongs to the TRAFAC class translation factor GTPase superfamily. Classic translation factor GTPase family. EIF2G subfamily. Heterotrimer composed of an alpha, a beta and a gamma chain. Mg(2+) serves as cofactor.

It carries out the reaction GTP + H2O = GDP + phosphate + H(+). EIF-2 functions in the early steps of protein synthesis by forming a ternary complex with GTP and initiator tRNA. The polypeptide is Translation initiation factor 2 subunit gamma (Pyrococcus horikoshii (strain ATCC 700860 / DSM 12428 / JCM 9974 / NBRC 100139 / OT-3)).